Consider the following 390-residue polypeptide: NADH-quinone oxidoreductase subunit D (390 aa).

It belongs to the complex I 49 kDa subunit family. In terms of assembly, NDH-1 is composed of 14 different subunits. Subunits NuoB, C, D, E, F, and G constitute the peripheral sector of the complex.

It localises to the cell inner membrane. The catalysed reaction is a quinone + NADH + 5 H(+)(in) = a quinol + NAD(+) + 4 H(+)(out). NDH-1 shuttles electrons from NADH, via FMN and iron-sulfur (Fe-S) centers, to quinones in the respiratory chain. The immediate electron acceptor for the enzyme in this species is believed to be ubiquinone. Couples the redox reaction to proton translocation (for every two electrons transferred, four hydrogen ions are translocated across the cytoplasmic membrane), and thus conserves the redox energy in a proton gradient. The chain is NADH-quinone oxidoreductase subunit D from Geotalea uraniireducens (strain Rf4) (Geobacter uraniireducens).